We begin with the raw amino-acid sequence, 765 residues long: Periplasmic beta-glucosidase (765 aa).

The signal sequence occupies residues 1 to 20 (MKWLCSVGIAVSLALQPALA). Residue Asp-287 is part of the active site.

It belongs to the glycosyl hydrolase 3 family.

It localises to the periplasm. It catalyses the reaction Hydrolysis of terminal, non-reducing beta-D-glucosyl residues with release of beta-D-glucose.. This is Periplasmic beta-glucosidase (bglX) from Escherichia coli (strain K12).